A 341-amino-acid chain; its full sequence is tRNA N6-adenosine threonylcarbamoyltransferase (341 aa).

2 residues coordinate Fe cation: histidine 111 and histidine 115. Substrate contacts are provided by residues 134-138 (LVSGG), aspartate 167, glycine 180, and asparagine 276. Aspartate 304 is a Fe cation binding site.

It belongs to the KAE1 / TsaD family. Fe(2+) serves as cofactor.

It is found in the cytoplasm. It carries out the reaction L-threonylcarbamoyladenylate + adenosine(37) in tRNA = N(6)-L-threonylcarbamoyladenosine(37) in tRNA + AMP + H(+). Functionally, required for the formation of a threonylcarbamoyl group on adenosine at position 37 (t(6)A37) in tRNAs that read codons beginning with adenine. Is involved in the transfer of the threonylcarbamoyl moiety of threonylcarbamoyl-AMP (TC-AMP) to the N6 group of A37, together with TsaE and TsaB. TsaD likely plays a direct catalytic role in this reaction. This is tRNA N6-adenosine threonylcarbamoyltransferase from Alteromonas mediterranea (strain DSM 17117 / CIP 110805 / LMG 28347 / Deep ecotype).